Consider the following 417-residue polypeptide: Snake venom metalloproteinase aculysin-1 (417 aa).

A signal peptide spans 1-20; it reads MIQVLLVTICLAAFPYQGSS. The propeptide occupies 21 to 189; it reads IMLESGKVND…KKPSWLNLTP (169 aa). Positions 197-392 constitute a Peptidase M12B domain; that stretch reads TSVNLQLIVD…KKPKCIHKKS (196 aa). 3 disulfide bridges follow: C308/C387, C349/C371, and C351/C354. Residue H333 coordinates Zn(2+). E334 is a catalytic residue. Zn(2+) contacts are provided by H337 and H343. Residues 393-417 constitute a propeptide that is removed on maturation; it reads LKTDTVSTSVSGNEPLDDNVDGFHA. The segment at 398–417 is disordered; that stretch reads VSTSVSGNEPLDDNVDGFHA. A compositionally biased stretch (acidic residues) spans 407–417; it reads PLDDNVDGFHA.

It belongs to the venom metalloproteinase (M12B) family. P-I subfamily. Monomer. Zn(2+) is required as a cofactor. Expressed by the venom gland.

The protein resides in the secreted. This protein is an alkaline zinc metalloprotease from snake venom that possesses weak hemorrhagic activity. The chain is Snake venom metalloproteinase aculysin-1 from Deinagkistrodon acutus (Hundred-pace snake).